The following is a 393-amino-acid chain: Major outer membrane protein P.IA (393 aa).

A signal peptide spans 1–19 (MRKKLTALVLSALPLAAVA).

It belongs to the Gram-negative porin family. Homotrimer.

It is found in the cell outer membrane. Serves as a slightly cation selective porin. Major antigen on the gonococcal cell surface and it may have pathogenic properties in addition to its porin activity. The sequence is that of Major outer membrane protein P.IA (porA) from Neisseria meningitidis serogroup C.